Consider the following 694-residue polypeptide: Type VI secretion system spike protein VgrG2 (694 aa).

Belongs to the VgrG protein family.

It localises to the secreted. Part of the type VI secretion system specialized secretion system, which delivers several virulence factors in both prokaryotic and eukaryotic cells during infection. Forms the spike at the tip of the elongating tube formed by haemolysin co-regulated protein Hcp. Allows the delivery of the VasX antibacterial toxin to target cells where it exerts its toxicity. The protein is Type VI secretion system spike protein VgrG2 (vgrG2) of Vibrio cholerae serotype O1 (strain ATCC 39315 / El Tor Inaba N16961).